Consider the following 23-residue polypeptide: Dahlein-4.3 (23 aa).

As to expression, expressed by the skin dorsal glands.

Its subcellular location is the secreted. Its function is as follows. Has no antimicrobial activity. The sequence is that of Dahlein-4.3 from Ranoidea dahlii (Dahl's aquatic frog).